Here is a 192-residue protein sequence, read N- to C-terminus: Ion-translocating oxidoreductase complex subunit A (192 aa).

6 helical membrane passes run 5–25 (LLLL…FLGL), 39–59 (IGMS…SYLV), 65–85 (LPFD…AVVV), 102–122 (ALGI…VALL), 134–154 (AIYG…FSAM), and 171–191 (AIAM…TGLV).

This sequence belongs to the NqrDE/RnfAE family. As to quaternary structure, the complex is composed of six subunits: RnfA, RnfB, RnfC, RnfD, RnfE and RnfG.

Its subcellular location is the cell inner membrane. Functionally, part of a membrane-bound complex that couples electron transfer with translocation of ions across the membrane. This Shewanella sp. (strain MR-4) protein is Ion-translocating oxidoreductase complex subunit A.